The primary structure comprises 310 residues: Transcription factor RAX3 (310 aa).

HTH myb-type domains are found at residues Lys9–Leu62 and Arg63–Leu117. 2 DNA-binding regions (H-T-H motif) span residues Trp38–Leu62 and Trp90–Leu113.

Ubiquitous.

It localises to the nucleus. Transcription activator. Positively regulates axillary meristems (AMs) formation and development, especially during inflorescence. The polypeptide is Transcription factor RAX3 (RAX3) (Arabidopsis thaliana (Mouse-ear cress)).